The sequence spans 406 residues: Cholinephosphotransferase 1 (406 aa).

Position 2 is an N-acetylalanine (A2). The Cytoplasmic segment spans residues 2-62; the sequence is AAGAGAGSAP…LLQWIPLWMA (61 aa). A helical transmembrane segment spans residues 63 to 83; the sequence is PNSITLLGLAVNVVTTLVLIS. CDP-choline is bound at residue N64. Residues 84–93 are Lumenal-facing; sequence YCPTATEEAP. Residues 94–118 traverse the membrane as a helical segment; sequence YWTYLLCALGLFIYQSLDAIDGKQA. Positions 111 and 114 each coordinate Mg(2+). R119 serves as a coordination point for CDP-choline. The Cytoplasmic portion of the chain corresponds to 119-125; that stretch reads RRTNSCS. The chain crosses the membrane as a helical span at residues 126–150; it reads PLGELFDHGCDSLSTVFMAVGASIA. Position 132 (D132) interacts with Mg(2+). H133 acts as the Proton acceptor in catalysis. D136 contributes to the Mg(2+) binding site. Residues 151–160 are Lumenal-facing; it reads ARLGTYPDWF. Residues 161–179 form a helical membrane-spanning segment; the sequence is FFCSFIGMFVFYCAHWQTY. The Cytoplasmic portion of the chain corresponds to 180–190; that stretch reads VSGMLRFGKVD. The helical transmembrane segment at 191-207 threads the bilayer; that stretch reads VTEIQIALVIVFVLSAF. The Lumenal segment spans residues 208-222; that stretch reads GGATMWDYTIPILEI. A helical transmembrane segment spans residues 223–248; sequence KLKILPVLGFLGGVIFSCSNYFHVIL. Residues 249 to 265 are Cytoplasmic-facing; the sequence is HGGVGKNGSTIAGTSVL. A helical transmembrane segment spans residues 266–281; it reads SPGLHIGLIIILAIMI. Residues 282–293 lie on the Lumenal side of the membrane; that stretch reads YKKSATDVFEKH. Residues 294–316 traverse the membrane as a helical segment; sequence PCLYILMFGCVFAKVSQKLVVAH. At 317 to 329 the chain is on the cytoplasmic side; the sequence is MTKSELYLQDTVF. A helical transmembrane segment spans residues 330 to 339; that stretch reads LGPGLLFLDQ. At 340–346 the chain is on the lumenal side; it reads YFNNFID. Residues 347–376 form a helical membrane-spanning segment; that stretch reads EYVVLWMAMVISSFDMVIYFSALCLQISRH. Over 377 to 406 the chain is Cytoplasmic; that stretch reads LHLNIFKTACHQAPEQVQVLSSKSHQNNMD.

It belongs to the CDP-alcohol phosphatidyltransferase class-I family. Requires Mg(2+) as cofactor. It depends on Mn(2+) as a cofactor. In terms of tissue distribution, highly expressed in testis, colon, small intestine, heart, prostate and spleen. Also detected in kidney, skeletal muscle, pancreas, leukocytes, ovary and thymus. Weakly expressed in the brain, placenta and lung. Overexpressed in cancerous breast epithelial cell lines.

The protein localises to the golgi apparatus membrane. It catalyses the reaction CDP-choline + a 1,2-diacyl-sn-glycerol = a 1,2-diacyl-sn-glycero-3-phosphocholine + CMP + H(+). It carries out the reaction 1-octadecanoyl-2-(5Z,8Z,11Z,14Z-eicosatetraenoyl)-sn-glycerol + CDP-choline = 1-octadecanoyl-2-(5Z,8Z,11Z,14Z-eicosatetraenoyl)-sn-glycero-3-phosphocholine + CMP + H(+). The catalysed reaction is 1-hexadecanoyl-2-(9Z-octadecenoyl)-sn-glycerol + CDP-choline = 1-hexadecanoyl-2-(9Z-octadecenoyl)-sn-glycero-3-phosphocholine + CMP + H(+). The enzyme catalyses 1-hexadecanoyl-2-(4Z,7Z,10Z,13Z,16Z,19Z-docosahexaenoyl)-sn-glycerol + CDP-choline = 1-hexadecanoyl-2-(4Z,7Z,10Z,13Z,16Z,19Z-docosahexaenoyl)-sn-glycero-3-phosphocholine + CMP + H(+). It catalyses the reaction 1,2-dioctanoyl-sn-glycerol + CDP-choline = 1,2-dioctanoyl-sn-glycero-3-phosphocholine + CMP + H(+). It participates in phospholipid metabolism; phosphatidylcholine biosynthesis; phosphatidylcholine from phosphocholine: step 2/2. Functionally, catalyzes the final step of de novo phosphatidylcholine (PC) synthesis, i.e. the transfer of choline phosphate from CDP-choline to the free hydroxyl of a diacylglycerol (DAG), producing a PC. It thereby plays a central role in the formation and maintenance of vesicular membranes. This Homo sapiens (Human) protein is Cholinephosphotransferase 1.